The following is a 224-amino-acid chain: uncharacterized protein (224 aa).

The N-terminal stretch at 1–21 (MKRTSRSLTAALLGIAALLAG) is a signal peptide. C22 carries N-palmitoyl cysteine lipidation. C22 is lipidated: S-diacylglycerol cysteine.

It to M.bovis LprP.

It is found in the cell membrane. This is an uncharacterized protein from Mycobacterium tuberculosis (strain ATCC 25618 / H37Rv).